The sequence spans 187 residues: MPVDLSKWSGPLSLQEVEERPQHPLQVTYSGVALDELGQVLTPTQVKNRPTSIVWDGLDPDKLYTLVLTDPDAPSRKDPKYREWHHFLVVNMKGGNISSGTVLSDYVGSGPPKGTGLHRYVWLVYEQDGPLKCDEPVLSNRSGDHRGKFKVANFRKKYHLGTPVAGSCYQAEWDDYVPKLYELLSGK.

S6 and S13 each carry phosphoserine. Phosphothreonine is present on T42. 2 positions are modified to phosphoserine: S52 and S98. Residues 93 to 134 (KGGNISSGTVLSDYVGSGPPKGTGLHRYVWLVYEQDGPLKCD) form an interaction with RAF1 region.

Belongs to the phosphatidylethanolamine-binding protein family. In terms of assembly, has a tendency to form dimers by disulfide cross-linking. Interacts with RAF1 and this interaction is enhanced if RAF1 is phosphorylated on residues 'Ser-338', 'Ser-339', 'Tyr-340' and 'Tyr-341'. Interacts with ALOX15; in response to IL13/interleukin-13, prevents the interaction of PEBP1 with RAF1 to activate the ERK signaling cascade.

The protein localises to the cytoplasm. Functionally, binds ATP, opioids and phosphatidylethanolamine. Has lower affinity for phosphatidylinositol and phosphatidylcholine. Serine protease inhibitor which inhibits thrombin, neuropsin and chymotrypsin but not trypsin, tissue type plasminogen activator and elastase. Inhibits the kinase activity of RAF1 by inhibiting its activation and by dissociating the RAF1/MEK complex and acting as a competitive inhibitor of MEK phosphorylation. HCNP may be involved in the function of the presynaptic cholinergic neurons of the central nervous system. HCNP increases the production of choline acetyltransferase but not acetylcholinesterase. Seems to be mediated by a specific receptor. The chain is Phosphatidylethanolamine-binding protein 1 (PEBP1) from Oryctolagus cuniculus (Rabbit).